Consider the following 331-residue polypeptide: DNA-directed RNA polymerase subunit alpha (331 aa).

An alpha N-terminal domain (alpha-NTD) region spans residues 1–226 (MLIAQRPTLT…ELFGLCRELN (226 aa)). The segment at 243 to 331 (TNPEMAVPIE…GGTFFSPEDE (89 aa)) is alpha C-terminal domain (alpha-CTD).

This sequence belongs to the RNA polymerase alpha chain family. Homodimer. The RNAP catalytic core consists of 2 alpha, 1 beta, 1 beta' and 1 omega subunit. When a sigma factor is associated with the core the holoenzyme is formed, which can initiate transcription.

The enzyme catalyses RNA(n) + a ribonucleoside 5'-triphosphate = RNA(n+1) + diphosphate. Functionally, DNA-dependent RNA polymerase catalyzes the transcription of DNA into RNA using the four ribonucleoside triphosphates as substrates. The protein is DNA-directed RNA polymerase subunit alpha of Bifidobacterium longum (strain NCC 2705).